A 180-amino-acid polypeptide reads, in one-letter code: ADP ribosylation factor 4 (180 aa).

Residue G2 is the site of N-myristoyl glycine attachment. Residues 24–31, 67–71, and 126–129 each bind GTP; these read GLDAAGKT, DVGGQ, and NKQD.

Belongs to the small GTPase superfamily. Arf family. As to expression, uniformly distributed throughout adults.

The protein localises to the golgi apparatus. Functionally, GTP-binding protein involved in protein trafficking; may modulate vesicle budding and uncoating within the Golgi apparatus. This chain is ADP ribosylation factor 4, found in Drosophila melanogaster (Fruit fly).